An 87-amino-acid chain; its full sequence is Sec-independent protein translocase protein TatA (87 aa).

Residues 1 to 21 (MGGMSITHWIVVAVVVMIFFG) traverse the membrane as a helical segment. A disordered region spans residues 40 to 87 (KKGMSEDDTTPPAAPPAPAPRLENQPLPPENTTQNVAQNVPNDIKNNQ). The span at 69-87 (ENTTQNVAQNVPNDIKNNQ) shows a compositional bias: polar residues.

It belongs to the TatA/E family. In terms of assembly, the Tat system comprises two distinct complexes: a TatABC complex, containing multiple copies of TatA, TatB and TatC subunits, and a separate TatA complex, containing only TatA subunits. Substrates initially bind to the TatABC complex, which probably triggers association of the separate TatA complex to form the active translocon.

Its subcellular location is the cell inner membrane. Part of the twin-arginine translocation (Tat) system that transports large folded proteins containing a characteristic twin-arginine motif in their signal peptide across membranes. TatA could form the protein-conducting channel of the Tat system. This chain is Sec-independent protein translocase protein TatA, found in Zymomonas mobilis subsp. mobilis (strain ATCC 31821 / ZM4 / CP4).